The following is a 559-amino-acid chain: Spermidine/putrescine import ATP-binding protein PotA (559 aa).

The 442-residue stretch at 7–448 folds into the ABC transporter domain; that stretch reads IEIEGLNKTF…PKTEWIANFI (442 aa). Residue 40 to 47 participates in ATP binding; it reads GPSGCGKT. The insert stretch occupies residues 108-317; that stretch reads WTKLDEIPKL…EAFEKRYLSR (210 aa).

This sequence belongs to the ABC transporter superfamily. Spermidine/putrescine importer (TC 3.A.1.11.1) family. In terms of assembly, the complex is composed of two ATP-binding proteins (PotA), two transmembrane proteins (PotB and PotC) and a solute-binding protein (PotD).

It localises to the cell membrane. The catalysed reaction is ATP + H2O + polyamine-[polyamine-binding protein]Side 1 = ADP + phosphate + polyamineSide 2 + [polyamine-binding protein]Side 1.. Its function is as follows. Part of the ABC transporter complex PotABCD involved in spermidine/putrescine import. Responsible for energy coupling to the transport system. This is Spermidine/putrescine import ATP-binding protein PotA from Mycoplasma genitalium (strain ATCC 33530 / DSM 19775 / NCTC 10195 / G37) (Mycoplasmoides genitalium).